The sequence spans 376 residues: Protein RecA (376 aa).

G78–T85 is an ATP binding site. Residues P355–D376 form a disordered region. A compositionally biased stretch (acidic residues) spans D363 to D376.

It belongs to the RecA family.

It is found in the cytoplasm. Can catalyze the hydrolysis of ATP in the presence of single-stranded DNA, the ATP-dependent uptake of single-stranded DNA by duplex DNA, and the ATP-dependent hybridization of homologous single-stranded DNAs. It interacts with LexA causing its activation and leading to its autocatalytic cleavage. The chain is Protein RecA from Corynebacterium glutamicum (strain R).